The primary structure comprises 296 residues: MSLGAKPFGEKKFIEIKGRRMAYIDEGTGDPILFQHGNPTSSYLWRNIMPHCAGLGRLIACDLIGMGDSDKLDPSGPERYTYAEHRDYLDALWEALDLGDRVVLVVHDWGSVLGFDWARRHRERVQGIAYMEAVTMPLEWADFPEQDRDLFQAFRSQAGEELVLQDNVFVEQVLPGLILRPLSEAEMAAYREPFLAAGEARRPTLSWPRQIPIAGTPADVVAIARDYAGWLSESPIPKLFINAEPGHLTTGRIRDFCRTWPNQTEITVAGAHFIQEDSPDEIGAAIAAFVRRLRPA.

An AB hydrolase-1 domain is found at 31–155 (PILFQHGNPT…QDRDLFQAFR (125 aa)). Residue D108 is the Nucleophile of the active site. Residue E132 is the Proton donor of the active site. Catalysis depends on H272, which acts as the Proton acceptor.

Belongs to the haloalkane dehalogenase family. Type 2 subfamily. Monomer.

It is found in the periplasm. It catalyses the reaction 1-haloalkane + H2O = a halide anion + a primary alcohol + H(+). The catalysed reaction is (3R,6R)-1,3,4,6-tetrachlorocyclohexa-1,4-diene + 2 H2O = 2,5-dichlorocyclohexa-2,5-dien-1,4-diol + 2 chloride + 2 H(+). The protein operates within xenobiotic degradation; gamma-hexachlorocyclohexane degradation. In terms of biological role, catalyzes hydrolytic cleavage of carbon-halogen bonds in halogenated aliphatic compounds, leading to the formation of the corresponding primary alcohols, halide ions and protons. Is involved in the degradation of the important environmental pollutant gamma-hexachlorocyclohexane (gamma-HCH or lindane) as it also catalyzes conversion of 1,3,4,6-tetrachloro-1,4-cyclohexadiene (1,4-TCDN) to 2,5-dichloro-2,5-cyclohexadiene-1,4-diol (2,5-DDOL) via the intermediate 2,4,5-trichloro-2,5-cyclohexadiene-1-ol (2,4,5-DNOL). This Sphingobium indicum (strain DSM 16412 / CCM 7286 / MTCC 6364 / B90A) protein is Haloalkane dehalogenase.